We begin with the raw amino-acid sequence, 142 residues long: Non-specific lipid transfer protein GPI-anchored 34 (142 aa).

The signal sequence occupies residues 1–22 (MAVAVTAVLFLAVVIAPQWTET). The disordered stretch occupies residues 21-43 (ETKKPPRPSDTSDTSGTSGRDRR). Residues 29–38 (SDTSDTSGTS) are compositionally biased toward low complexity. 4 disulfides stabilise this stretch: C46/C85, C57/C69, C70/C106, and C83/C114. N120 carries GPI-anchor amidated asparagine lipidation. The propeptide at 121-142 (GGATKKIVASMGLFGVVASLFF) is removed in mature form.

The protein belongs to the plant LTP family.

It localises to the cell membrane. Probable lipid transfer protein. The protein is Non-specific lipid transfer protein GPI-anchored 34 of Arabidopsis thaliana (Mouse-ear cress).